A 157-amino-acid polypeptide reads, in one-letter code: Probable succinate transporter subunit YjjB (157 aa).

Helical transmembrane passes span 2–22 (GIISFIFALAEDMLLAAIPAV), 55–75 (AGFNIEWATFLAALLVGSIGI), 87–107 (IFTVAAVIPMFPGISAYTAMI), and 129–149 (FLKASSIVGALSIGLSIPGLW).

Belongs to the ThrE exporter (TC 2.A.79) family. As to quaternary structure, the transporter is composed of YjjB and YjjP.

It is found in the cell inner membrane. Involved in succinate export with YjjP. Both proteins are required for export. The protein is Probable succinate transporter subunit YjjB of Klebsiella pneumoniae (strain 342).